The sequence spans 575 residues: Adenine deaminase 1 (575 aa).

It belongs to the metallo-dependent hydrolases superfamily. Adenine deaminase family. Mn(2+) is required as a cofactor.

The enzyme catalyses adenine + H2O + H(+) = hypoxanthine + NH4(+). The protein is Adenine deaminase 1 of Agrobacterium fabrum (strain C58 / ATCC 33970) (Agrobacterium tumefaciens (strain C58)).